We begin with the raw amino-acid sequence, 327 residues long: UPF0665 family protein C23C4.06c (327 aa).

It belongs to the UPF0665 family.

Its subcellular location is the cytoplasm. It is found in the nucleus. This is UPF0665 family protein C23C4.06c from Schizosaccharomyces pombe (strain 972 / ATCC 24843) (Fission yeast).